A 240-amino-acid polypeptide reads, in one-letter code: Glutathione S-transferase omega-1 (240 aa).

Ser2 carries the N-acetylserine modification. The GST N-terminal domain maps to 22–101 (GQIRVYSMRF…YLDEAYPEKK (80 aa)). Cys32 serves as the catalytic Nucleophile. Lys57 is modified (N6-acetyllysine). Residues Lys59, Val72, and 85–86 (ES) contribute to the glutathione site. Residues 106 to 227 (DPYKKARQKM…AKTYREYLNL (122 aa)) enclose the GST C-terminal domain. Residue Ser129 is modified to Phosphoserine. An N6-acetyllysine modification is found at Lys152.

It belongs to the GST superfamily. Omega family. Homodimer.

The protein localises to the cytoplasm. Its subcellular location is the cytosol. It carries out the reaction RX + glutathione = an S-substituted glutathione + a halide anion + H(+). The catalysed reaction is L-dehydroascorbate + 2 glutathione = glutathione disulfide + L-ascorbate. The enzyme catalyses methylarsonate + 2 glutathione + H(+) = methylarsonous acid + glutathione disulfide + H2O. Its function is as follows. Exhibits glutathione-dependent thiol transferase and dehydroascorbate reductase activities. Has S-(phenacyl)glutathione reductase activity. Also has glutathione S-transferase activity. Participates in the biotransformation of inorganic arsenic and reduces monomethylarsonic acid (MMA) and dimethylarsonic acid. The protein is Glutathione S-transferase omega-1 (Gsto1) of Mus musculus (Mouse).